Here is a 274-residue protein sequence, read N- to C-terminus: Thiamine kinase (274 aa).

This sequence belongs to the thiamine kinase family.

It catalyses the reaction thiamine + ATP = thiamine phosphate + ADP + H(+). The protein operates within cofactor biosynthesis; thiamine diphosphate biosynthesis; thiamine phosphate from thiamine: step 1/1. In terms of biological role, catalyzes the ATP-dependent phosphorylation of thiamine to thiamine phosphate. Is involved in thiamine salvage. This Salmonella paratyphi A (strain ATCC 9150 / SARB42) protein is Thiamine kinase.